The following is a 170-amino-acid chain: Large ribosomal subunit protein uL18m (170 aa).

The protein belongs to the universal ribosomal protein uL18 family. In terms of assembly, component of the mitochondrial ribosome large subunit (39S) which comprises a 16S rRNA and about 50 distinct proteins.

It is found in the mitochondrion. This is Large ribosomal subunit protein uL18m (mrpl-18) from Caenorhabditis elegans.